The following is a 732-amino-acid chain: Cullin-3A (732 aa).

The Cullin neddylation domain maps to 662–724; sequence DRKPQIEAAI…RDFLERDSTD (63 aa). A Glycyl lysine isopeptide (Lys-Gly) (interchain with G-Cter in NEDD8) cross-link involves residue Lys-676.

Belongs to the cullin family. Interacts with CSN2 and RBX1A. Interacts with BTB/POZ domain-containing proteins BPM1, BPM2, BPM3, BPM6, BT1, BT2, BT3, BT5, AT1G01640, AT1G21780 and AT5G48510. Interacts with SR1IP1. Interacts with NPR3 and NPR4. Binds to NPR1; this interaction requires NPR3 and NPR4. Neddylated. Deneddylated via its interaction with the COP9 signalosome (CSN) complex.

Its function is as follows. Component of the cullin-RING ubiquitin ligases (CRL), or CUL3-RBX1-BTB protein E3 ligase complexes which mediate the ubiquitination and subsequent proteasomal degradation of target proteins. The functional specificity of the CRL complex depends on the BTB domain-containing protein as the substrate recognition component. Involved in embryo pattern formation and endosperm development. Required for the normal division and organization of the root stem cells and columella root cap cells. Regulates primary root growth by an unknown pathway, but in an ethylene-dependent manner. Functions in distal root patterning, by an ethylene-independent mechanism. Functionally redundant with CUL3B. The chain is Cullin-3A from Arabidopsis thaliana (Mouse-ear cress).